A 180-amino-acid chain; its full sequence is Non-specific lipid transfer protein GPI-anchored 3 (180 aa).

Residues 1-22 (MEAVRFAVAVVLVFCYVTSSNA) form the signal peptide. 4 disulfide bridges follow: Cys41-Cys78, Cys48-Cys62, Cys63-Cys104, and Cys76-Cys113. 2 N-linked (GlcNAc...) asparagine glycosylation sites follow: Asn91 and Asn120. Composition is skewed to low complexity over residues 116-125 (SAGTNSSSTP) and 133-156 (PASS…TAKP). Positions 116 to 156 (SAGTNSSSTPPATPKTPPASSTSTGTGSGSTGNAAPSTAKP) are disordered. Residue Ser158 is the site of GPI-anchor amidated serine attachment. A propeptide spans 159-180 (SAPAINFGGLSFASAVVATLFF) (removed in mature form).

Belongs to the plant LTP family. In terms of tissue distribution, restricted to stamen, pollen and sporophytic tissues. Also detected, at low levels, in stems and leaves.

It localises to the cell membrane. Functionally, lipid transfer protein involved in seed and ovule maturation and development, probably by regulating the fatty acids homeostasis during suberin and sporopollenin biosynthesis or deposition. The chain is Non-specific lipid transfer protein GPI-anchored 3 from Arabidopsis thaliana (Mouse-ear cress).